A 2061-amino-acid polypeptide reads, in one-letter code: Putative PWWP domain-containing DNA repair factor 4 (2061 aa).

10 disordered regions span residues T101–R211, A382–V408, T541–S586, P668–S694, P864–S910, P1046–S1072, A1159–S1182, K1205–K1383, P1521–P1548, and K1602–N1726. 2 stretches are compositionally biased toward basic and acidic residues: residues P133–N153 and E162–Q173. The span at T397 to V408 shows a compositional bias: polar residues. Positions G1051–A1061 are enriched in polar residues. Residues D1364–A1373 are compositionally biased toward polar residues. Basic and acidic residues predominate over residues L1639–P1648. Polar residues predominate over residues P1656–I1665. The PWWP domain maps to R1756 to K1817.

This sequence belongs to the PWWP3A family.

The protein is Putative PWWP domain-containing DNA repair factor 4 of Homo sapiens (Human).